The primary structure comprises 156 residues: MPRKGHVSKRDVLADPVYNSKLVTKLINHLMKDGKRAQASSILYDAFDIIKDKTGREPMDVFEEAMNNVKPVLEVKARRIGGSNYQVPVEVRPERQTTLALRWLVSYSRLRNEHTMDERLANELIDASNNTGSAVKKREDVHRMAEANRAFAHYRF.

The protein belongs to the universal ribosomal protein uS7 family. As to quaternary structure, part of the 30S ribosomal subunit. Contacts proteins S9 and S11.

In terms of biological role, one of the primary rRNA binding proteins, it binds directly to 16S rRNA where it nucleates assembly of the head domain of the 30S subunit. Is located at the subunit interface close to the decoding center, probably blocks exit of the E-site tRNA. This chain is Small ribosomal subunit protein uS7, found in Lactobacillus delbrueckii subsp. bulgaricus (strain ATCC 11842 / DSM 20081 / BCRC 10696 / JCM 1002 / NBRC 13953 / NCIMB 11778 / NCTC 12712 / WDCM 00102 / Lb 14).